We begin with the raw amino-acid sequence, 748 residues long: Phosphoenolpyruvate-dependent phosphotransferase system (748 aa).

The GAF domain maps to 1 to 127 (MLTRLREIVE…RRQLLGVLVV (127 aa)). The tract at residues 128–170 (QQRELRQYDESEESFLVTLATQMAAILSQSQVTALFGQYRQTR) is linker. The PTS EI stretch occupies residues 171–748 (IRALPAAPGV…GMGGLIRGGL (578 aa)). Catalysis depends on His-356, which acts as the Tele-phosphohistidine intermediate. Phosphoenolpyruvate is bound by residues Arg-462 and Arg-498. The Mg(2+) site is built by Glu-597 and Asp-621. Phosphoenolpyruvate-binding positions include 620 to 621 (ND) and Arg-631. Cys-668 functions as the Proton donor in the catalytic mechanism.

This sequence belongs to the PEP-utilizing enzyme family. Requires Mg(2+) as cofactor.

It localises to the cytoplasm. The catalysed reaction is L-histidyl-[protein] + phosphoenolpyruvate = N(pros)-phospho-L-histidyl-[protein] + pyruvate. Component of the phosphoenolpyruvate-dependent nitrogen-metabolic phosphotransferase system (nitrogen-metabolic PTS), that seems to be involved in regulating nitrogen metabolism. Enzyme I-Ntr transfers the phosphoryl group from phosphoenolpyruvate (PEP) to the phosphoryl carrier protein (NPr). Could function in the transcriptional regulation of sigma-54 dependent operons in conjunction with the NPr (PtsO) and EIIA-Ntr (PtsN) proteins. Enzyme I-Ntr is specific for NPr. The protein is Phosphoenolpyruvate-dependent phosphotransferase system (ptsP) of Salmonella typhimurium (strain LT2 / SGSC1412 / ATCC 700720).